The chain runs to 246 residues: Ribonuclease PH (246 aa).

Phosphate contacts are provided by residues Arg-91 and 129 to 131 (GTR).

Belongs to the RNase PH family. In terms of assembly, homohexameric ring arranged as a trimer of dimers.

The enzyme catalyses tRNA(n+1) + phosphate = tRNA(n) + a ribonucleoside 5'-diphosphate. Its function is as follows. Phosphorolytic 3'-5' exoribonuclease that plays an important role in tRNA 3'-end maturation. Removes nucleotide residues following the 3'-CCA terminus of tRNAs; can also add nucleotides to the ends of RNA molecules by using nucleoside diphosphates as substrates, but this may not be physiologically important. Probably plays a role in initiation of 16S rRNA degradation (leading to ribosome degradation) during starvation. This chain is Ribonuclease PH, found in Burkholderia cenocepacia (strain ATCC BAA-245 / DSM 16553 / LMG 16656 / NCTC 13227 / J2315 / CF5610) (Burkholderia cepacia (strain J2315)).